Reading from the N-terminus, the 408-residue chain is Argininosuccinate synthase (408 aa).

ATP-binding positions include 12–20 (AYSGGLDTS) and alanine 39. Tyrosine 90 and serine 95 together coordinate L-citrulline. Position 120 (glycine 120) interacts with ATP. Positions 122, 126, and 127 each coordinate L-aspartate. Residue asparagine 126 coordinates L-citrulline. Arginine 130, serine 181, serine 190, glutamate 266, and tyrosine 278 together coordinate L-citrulline.

It belongs to the argininosuccinate synthase family. Type 1 subfamily. As to quaternary structure, homotetramer.

The protein localises to the cytoplasm. It carries out the reaction L-citrulline + L-aspartate + ATP = 2-(N(omega)-L-arginino)succinate + AMP + diphosphate + H(+). It functions in the pathway amino-acid biosynthesis; L-arginine biosynthesis; L-arginine from L-ornithine and carbamoyl phosphate: step 2/3. This is Argininosuccinate synthase from Methylococcus capsulatus (strain ATCC 33009 / NCIMB 11132 / Bath).